The primary structure comprises 533 residues: GMP synthase [glutamine-hydrolyzing] (533 aa).

In terms of domain architecture, Glutamine amidotransferase type-1 spans 12 to 206 (TILVLDFGSQ…AVGICGAEQK (195 aa)). C88 (nucleophile) is an active-site residue. Catalysis depends on residues H180 and E182. Residues 207–408 (WTMAEFIGQE…LGISPELVGR (202 aa)) enclose the GMPS ATP-PPase domain. 235-241 (SGGVDST) is a binding site for ATP. R308, D470, K525, and E531 together coordinate XMP.

Homodimer. Mg(2+) is required as a cofactor.

The protein localises to the cytoplasm. It localises to the cytosol. It carries out the reaction XMP + L-glutamine + ATP + H2O = GMP + L-glutamate + AMP + diphosphate + 2 H(+). It functions in the pathway purine metabolism; GMP biosynthesis; GMP from XMP (L-Gln route): step 1/1. Functionally, catalyzes the conversion of xanthine monophosphate (XMP) to GMP in the presence of glutamine and ATP through an adenyl-XMP intermediate. This is GMP synthase [glutamine-hydrolyzing] (gua1) from Emericella nidulans (strain FGSC A4 / ATCC 38163 / CBS 112.46 / NRRL 194 / M139) (Aspergillus nidulans).